The chain runs to 430 residues: Asparagine--tRNA ligase (430 aa).

This sequence belongs to the class-II aminoacyl-tRNA synthetase family. As to quaternary structure, homodimer.

It localises to the cytoplasm. The catalysed reaction is tRNA(Asn) + L-asparagine + ATP = L-asparaginyl-tRNA(Asn) + AMP + diphosphate + H(+). The polypeptide is Asparagine--tRNA ligase (Listeria monocytogenes serotype 4b (strain F2365)).